We begin with the raw amino-acid sequence, 29 residues long: Cytochrome b6-f complex subunit 8 (29 aa).

A helical membrane pass occupies residues 3-23 (ITSIAWGALMVVFTFSLSLVV).

It belongs to the PetN family. As to quaternary structure, the 4 large subunits of the cytochrome b6-f complex are cytochrome b6, subunit IV (17 kDa polypeptide, PetD), cytochrome f and the Rieske protein, while the 4 small subunits are PetG, PetL, PetM and PetN. The complex functions as a dimer.

It is found in the plastid membrane. In terms of biological role, component of the cytochrome b6-f complex, which mediates electron transfer between photosystem II (PSII) and photosystem I (PSI), cyclic electron flow around PSI, and state transitions. The chain is Cytochrome b6-f complex subunit 8 from Aneura mirabilis (Parasitic liverwort).